The chain runs to 148 residues: Large ribosomal subunit protein bL9 (148 aa).

This sequence belongs to the bacterial ribosomal protein bL9 family.

Functionally, binds to the 23S rRNA. This chain is Large ribosomal subunit protein bL9, found in Bacillus cereus (strain B4264).